Reading from the N-terminus, the 290-residue chain is Dihydroorotate dehydrogenase B (NAD(+)), catalytic subunit (290 aa).

FMN contacts are provided by residues S17 and K42–T43. Substrate is bound by residues K42, N67–L71, and N117. Residue N117 participates in FMN binding. S120 functions as the Nucleophile in the catalytic mechanism. Residues K152 and I177 each coordinate FMN. Substrate is bound at residue N178 to T179. Residues G203, G229–G230, and G251–T252 each bind FMN.

This sequence belongs to the dihydroorotate dehydrogenase family. Type 1 subfamily. Heterotetramer of 2 PyrK and 2 PyrD type B subunits. The cofactor is FMN.

It is found in the cytoplasm. The catalysed reaction is (S)-dihydroorotate + NAD(+) = orotate + NADH + H(+). The protein operates within pyrimidine metabolism; UMP biosynthesis via de novo pathway; orotate from (S)-dihydroorotate (NAD(+) route): step 1/1. Its function is as follows. Catalyzes the conversion of dihydroorotate to orotate with NAD(+) as electron acceptor. This Saccharolobus solfataricus (strain ATCC 35092 / DSM 1617 / JCM 11322 / P2) (Sulfolobus solfataricus) protein is Dihydroorotate dehydrogenase B (NAD(+)), catalytic subunit (pyrD).